The primary structure comprises 361 residues: Porphobilinogen deaminase (361 aa).

An N-acetylserine modification is found at Ser2. Residue Ser69 is modified to Phosphoserine. Position 74 is an N6-acetyllysine (Lys74). The residue at position 147 (Ser147) is a Phosphoserine. An S-(dipyrrolylmethanemethyl)cysteine modification is found at Cys261.

The protein belongs to the HMBS family. In terms of assembly, monomer. Dipyrromethane serves as cofactor.

The protein resides in the cytoplasm. It is found in the cytosol. The enzyme catalyses 4 porphobilinogen + H2O = hydroxymethylbilane + 4 NH4(+). The protein operates within porphyrin-containing compound metabolism; protoporphyrin-IX biosynthesis; coproporphyrinogen-III from 5-aminolevulinate: step 2/4. Functionally, as part of the heme biosynthetic pathway, catalyzes the sequential polymerization of four molecules of porphobilinogen to form hydroxymethylbilane, also known as preuroporphyrinogen. Catalysis begins with the assembly of the dipyrromethane cofactor by the apoenzyme from two molecules of porphobilinogen or from preuroporphyrinogen. The covalently linked cofactor acts as a primer, around which the tetrapyrrole product is assembled. In the last step of catalysis, the product, preuroporphyrinogen, is released, leaving the cofactor bound to the holodeaminase intact. In Mus musculus (Mouse), this protein is Porphobilinogen deaminase (Hmbs).